The sequence spans 97 residues: YcgL domain-containing protein Pfl01_1389 (97 aa).

The 85-residue stretch at 3–87 folds into the YcgL domain; sequence RICSIYQSSK…AEEEYIEHLP (85 aa).

This chain is YcgL domain-containing protein Pfl01_1389, found in Pseudomonas fluorescens (strain Pf0-1).